The sequence spans 378 residues: MLAPYACQPGESRGRQQPESMSTFRSPFQRDRDRIIHSSAFRRLKHKTQVFVEHEGDYYRTRLTHSIEVAQVARTISGVLGLNTDLAECIALAHDLGHTPFGHTGEDALAKLMEPYGGFDHNAQAMRIVTRLERHYAEFDGLNLTWESLEGIAKHNGPVEGPLPYALAEANAQWDLELHTYASAEAQVAAIADDVAYSHHDLHDGLRSGLFTEDDLMELPVTAPAFAEVDALYPGLEPMRRRHEALRRVFGRMVEDVIAVAQGRLEAAQPKSVEEIRQMGATVIRFSKPLYQELKVIRSFLFHRMYRAPSVMKERAKVTAVVNDLFPLFMRQPELLPQEWRRDVEAAEDETTLARIVADYVAGMTDRFALQEHARLCG.

Residues 1–28 are disordered; that stretch reads MLAPYACQPGESRGRQQPESMSTFRSPF. Residues 15–26 show a composition bias toward polar residues; that stretch reads RQQPESMSTFRS. Positions 62-198 constitute an HD domain; the sequence is RLTHSIEVAQ…AAIADDVAYS (137 aa).

It belongs to the dGTPase family. Type 2 subfamily.

The sequence is that of Deoxyguanosinetriphosphate triphosphohydrolase-like protein from Cereibacter sphaeroides (strain ATCC 17025 / ATH 2.4.3) (Rhodobacter sphaeroides).